We begin with the raw amino-acid sequence, 269 residues long: MPELPEVETSRRGIEPWVAGQTILRAEVRNARLRWPVDEEIIALRDQRVLSVQRRAKYLLLELEKGWIIIHLGMSGRLRVLPQPQPPEKHDHVDLVIGNGCIIRYTDPRRFGAWLWSDDLRTSRALAHLGPEPLSDKFDGRWLYQKSHNKRTSIKPWLMDNTLVVGVGNIYASESLFVAGILPGRAAGSLSEEEAGLLAESIKAVLLRSIEQGGTTLRDFLQSDGKPGYFVQELQVYGRGGEPCRVCGTPIQMAKHGQRSTFFCPACQH.

Pro-2 serves as the catalytic Schiff-base intermediate with DNA. The Proton donor role is filled by Glu-3. The active-site Proton donor; for beta-elimination activity is the Lys-57. His-90, Arg-109, and Lys-150 together coordinate DNA. The segment at 235–269 (QVYGRGGEPCRVCGTPIQMAKHGQRSTFFCPACQH) adopts an FPG-type zinc-finger fold. Arg-259 acts as the Proton donor; for delta-elimination activity in catalysis.

The protein belongs to the FPG family. Monomer. Requires Zn(2+) as cofactor.

The catalysed reaction is Hydrolysis of DNA containing ring-opened 7-methylguanine residues, releasing 2,6-diamino-4-hydroxy-5-(N-methyl)formamidopyrimidine.. It carries out the reaction 2'-deoxyribonucleotide-(2'-deoxyribose 5'-phosphate)-2'-deoxyribonucleotide-DNA = a 3'-end 2'-deoxyribonucleotide-(2,3-dehydro-2,3-deoxyribose 5'-phosphate)-DNA + a 5'-end 5'-phospho-2'-deoxyribonucleoside-DNA + H(+). Its function is as follows. Involved in base excision repair of DNA damaged by oxidation or by mutagenic agents. Acts as a DNA glycosylase that recognizes and removes damaged bases. Has a preference for oxidized purines, such as 7,8-dihydro-8-oxoguanine (8-oxoG). Has AP (apurinic/apyrimidinic) lyase activity and introduces nicks in the DNA strand. Cleaves the DNA backbone by beta-delta elimination to generate a single-strand break at the site of the removed base with both 3'- and 5'-phosphates. This chain is Formamidopyrimidine-DNA glycosylase, found in Sodalis glossinidius (strain morsitans).